The following is a 270-amino-acid chain: Tetraspanin-2 (270 aa).

The Cytoplasmic portion of the chain corresponds to 1-8 (MALANNLT). A helical membrane pass occupies residues 9–29 (AILNLLALLCSIPITASGIWL). At 30–42 (ASKPDNECVNLLR) the chain is on the extracellular side. A helical transmembrane segment spans residues 43–63 (WPVVVLGVLILVVSATGFIGA). Residues 64-74 (YKYKETLLAVY) are Cytoplasmic-facing. Residues 75 to 95 (LCCMAILIGLLLVVLIFAFVV) form a helical membrane-spanning segment. At 96-232 (TRPDGSYRVP…NLRKEWRKAN (137 aa)) the chain is on the extracellular side. The chain crosses the membrane as a helical span at residues 233-253 (LILIITVVVLIWVYVIACSAF). The Cytoplasmic portion of the chain corresponds to 254 to 270 (RNAQTEDLFRKYKQGWV).

This sequence belongs to the tetraspanin (TM4SF) family.

It is found in the membrane. Functionally, may be involved in the regulation of cell differentiation. This chain is Tetraspanin-2 (TET2), found in Arabidopsis thaliana (Mouse-ear cress).